The following is a 706-amino-acid chain: Forkhead box protein P2 (706 aa).

Residues 1–28 (MMQESATETISNSSMNQNGMSTLSSQLD) show a composition bias toward polar residues. Disordered stretches follow at residues 1–45 (MMQE…SEVS) and 275–305 (IKHG…ITHH). Over residues 287 to 296 (SSSTTSTTTS) the composition is skewed to low complexity. The C2H2-type zinc finger occupies 337–362 (GVCKWPGCENICEDFGQFLKHLNNEH). Residues 379-400 (VQQLEIQLSKERERLQAMMTHL) form a leucine-zipper region. The segment at 413 to 417 (PLNLV) is ctbp1-binding. Residues 495–585 (RPPFTYATLI…SQKITASPTL (91 aa)) constitute a DNA-binding region (fork-head). The interval 672–706 (DDEDCPMSLVTTANHSPELEEDRELEEEPLSEDLE) is disordered. A compositionally biased stretch (acidic residues) spans 690 to 706 (LEEDRELEEEPLSEDLE).

In terms of assembly, dimerization is required for DNA-binding. As to expression, at stage 15, expressed in the anterior/superior eye field and the caudal branchial arch. At later stages, expression persists in the retina and in the caudal branchial arch. Expressed in the pronephros and the tip of the tail. Beginning with stage 35, expression in the brain is localized to distinct subdomains of the anterior prosencephalon, the medial mesencephalon and to lateral domains of the hindbrain.

The protein resides in the nucleus. Functionally, transcriptional repressor. This is Forkhead box protein P2 from Xenopus laevis (African clawed frog).